We begin with the raw amino-acid sequence, 311 residues long: Tyrosine recombinase XerD (311 aa).

The Core-binding (CB) domain maps to 2 to 95 (KTLALQLQGY…AVRGLHRFAA (94 aa)). The Tyr recombinase domain maps to 116–304 (RLPKSLTIDE…TVHALREVWA (189 aa)). Residues Arg160, Lys184, His256, Arg259, and His282 contribute to the active site. Catalysis depends on Tyr291, which acts as the O-(3'-phospho-DNA)-tyrosine intermediate.

Belongs to the 'phage' integrase family. XerD subfamily. In terms of assembly, forms a cyclic heterotetrameric complex composed of two molecules of XerC and two molecules of XerD.

It is found in the cytoplasm. Its function is as follows. Site-specific tyrosine recombinase, which acts by catalyzing the cutting and rejoining of the recombining DNA molecules. The XerC-XerD complex is essential to convert dimers of the bacterial chromosome into monomers to permit their segregation at cell division. It also contributes to the segregational stability of plasmids. The polypeptide is Tyrosine recombinase XerD (Mycobacterium tuberculosis (strain CDC 1551 / Oshkosh)).